Consider the following 79-residue polypeptide: Conotoxin ArMKLT2-031 (79 aa).

An N-terminal signal peptide occupies residues 1-22 (MKLTCVLIIAVLFLTACQLTTG). Residues 23–46 (ETYSRGEQKDHALRSTDKNSKLTR) constitute a propeptide that is removed on maturation. The residue at position 47 (Q47) is a Pyrrolidone carboxylic acid. Intrachain disulfides connect C48-C62, C55-C66, and C61-C73.

It belongs to the conotoxin O1 superfamily. As to expression, expressed by the venom duct.

It localises to the secreted. The sequence is that of Conotoxin ArMKLT2-031 from Conus arenatus (Sand-dusted cone).